The primary structure comprises 171 residues: MVVQPDIPGDNDPGMGRRLGVDVGTVRIGLAMSDSGARMAMPFETLARETGLKDSDKQDIDRIAEVICDNHIVEVVVGLPRDLKGNGSKSVKHAKDVAFRIRRRMHKNGWEHVAVKMADERLTTVVATQALRASGVSEKKGRRVVDQAAAVEILQSWLDARINVLENRTIP.

It belongs to the YqgF nuclease family.

It is found in the cytoplasm. Its function is as follows. Could be a nuclease involved in processing of the 5'-end of pre-16S rRNA. In Corynebacterium diphtheriae (strain ATCC 700971 / NCTC 13129 / Biotype gravis), this protein is Putative pre-16S rRNA nuclease.